Reading from the N-terminus, the 157-residue chain is MTEKPTYLTREGRARLEAELEHLMTVERKQIAERIAAAKELGDISESGEYEDAKKAQALLEGRIRELKHLLSRAEIIDEDQASTGEVRIGSSVTVRFEDDGSEETWTIVGSAEANPRQGRISNESPIGAALLGKRVRNKVTVHTPSGVMKLTILKVR.

Positions 47-75 (SGEYEDAKKAQALLEGRIRELKHLLSRAE) form a coiled coil.

It belongs to the GreA/GreB family.

In terms of biological role, necessary for efficient RNA polymerase transcription elongation past template-encoded arresting sites. The arresting sites in DNA have the property of trapping a certain fraction of elongating RNA polymerases that pass through, resulting in locked ternary complexes. Cleavage of the nascent transcript by cleavage factors such as GreA or GreB allows the resumption of elongation from the new 3'terminus. GreA releases sequences of 2 to 3 nucleotides. This Chloroflexus aggregans (strain MD-66 / DSM 9485) protein is Transcription elongation factor GreA.